The primary structure comprises 352 residues: Cyclin-dependent kinase 7 (352 aa).

The 284-residue stretch at 18-301 folds into the Protein kinase domain; the sequence is YEKLDFLGEG…ASQALRKRYF (284 aa). ATP contacts are provided by residues 24-32 and lysine 47; that span reads LGEGQFATV. Aspartate 143 functions as the Proton acceptor in the catalytic mechanism. At serine 170 the chain carries Phosphoserine; by CDK1 and CDK2. Position 176 is a phosphothreonine; by CDK2 (threonine 176).

It belongs to the protein kinase superfamily. CMGC Ser/Thr protein kinase family. CDC2/CDKX subfamily. As to quaternary structure, probably associates with cyclin-H (ccnh) and mat1 to form a multimeric active enzyme. In terms of processing, phosphorylation of Ser-170 during mitosis inactivates the enzyme. Phosphorylation of Thr-176 is required for activity. Phosphorylated at Ser-170 and Thr-176 by CDK2.

The protein resides in the nucleus. It catalyses the reaction L-seryl-[protein] + ATP = O-phospho-L-seryl-[protein] + ADP + H(+). The catalysed reaction is L-threonyl-[protein] + ATP = O-phospho-L-threonyl-[protein] + ADP + H(+). It carries out the reaction [DNA-directed RNA polymerase] + ATP = phospho-[DNA-directed RNA polymerase] + ADP + H(+). Its activity is regulated as follows. Phosphorylation at Thr-176 is required for enzymatic activity. Its function is as follows. Serine/threonine kinase involved in cell cycle control and in RNA polymerase II-mediated RNA transcription. Cyclin-dependent kinases (CDKs) are activated by the binding to a cyclin and mediate the progression through the cell cycle. Each different complex controls a specific transition between 2 subsequent phases in the cell cycle. Required for both activation and complex formation of cdk1/cyclin-B during G2-M transition, and for activation of cdk2/cyclins during G1-S transition (but not complex formation). cdk7 is the catalytic subunit of the CDK-activating kinase (CAK) complex. CAK activates the cyclin-associated kinases cdk1, cdk2, cdk4 and cdk6 by threonine phosphorylation, thus regulating cell cycle progression. Initiates transcription by RNA polymerase II by mediating phosphorylation of polr2a at 'Ser-5' of the repetitive C-terminal domain (CTD) when polr2a is in complex with DNA, promoting dissociation from DNA and initiation. CAK complexed to the core-TFIIH basal transcription factor activates RNA polymerase II by serine phosphorylation of the CTD of polr2a, allowing its escape from the promoter and elongation of the transcripts. The sequence is that of Cyclin-dependent kinase 7 (cdk7) from Xenopus laevis (African clawed frog).